The primary structure comprises 407 residues: Uronyl 2-sulfotransferase (407 aa).

The segment at 1-20 (MKKKQQQHPGGGTDPWPHGA) is disordered. The Cytoplasmic portion of the chain corresponds to 1 to 49 (MKKKQQQHPGGGTDPWPHGAPVGGAPPCLGSCKRRIPLLPFLRFSLRDY). A helical; Signal-anchor for type II membrane protein transmembrane segment spans residues 50–70 (GFCMATLLVFCLGSLFYQLSG). Topologically, residues 71 to 407 (GPPRFLLDLR…EKWLEDIYKR (337 aa)) are lumenal. N-linked (GlcNAc...) asparagine glycosylation is found at N85, N141, and N156. The active site involves H169. 2 N-linked (GlcNAc...) asparagine glycosylation sites follow: N174 and N320. A compositionally biased stretch (acidic residues) spans 386–400 (TEEPIDDEEQDDEKW). Positions 386–407 (TEEPIDDEEQDDEKWLEDIYKR) are disordered.

This sequence belongs to the sulfotransferase 3 family.

The protein localises to the golgi apparatus membrane. In terms of biological role, sulfotransferase that catalyzes the transfer of sulfate to the position 2 of uronyl residues in glycosaminoglycan chains. Has mainly activity toward iduronyl residues in dermatan sulfate, and weaker activity toward glucuronyl residues of chondroitin sulfate. Has no activity toward desulfated N-resulfated heparin. In Mus musculus (Mouse), this protein is Uronyl 2-sulfotransferase.